A 156-amino-acid chain; its full sequence is Ribosomal RNA large subunit methyltransferase H (156 aa).

S-adenosyl-L-methionine-binding positions include Leu72, Gly104, and 123 to 128 (FGKMVW).

Belongs to the RNA methyltransferase RlmH family. In terms of assembly, homodimer.

The protein localises to the cytoplasm. It carries out the reaction pseudouridine(1915) in 23S rRNA + S-adenosyl-L-methionine = N(3)-methylpseudouridine(1915) in 23S rRNA + S-adenosyl-L-homocysteine + H(+). Specifically methylates the pseudouridine at position 1915 (m3Psi1915) in 23S rRNA. The chain is Ribosomal RNA large subunit methyltransferase H from Ruegeria sp. (strain TM1040) (Silicibacter sp.).